Consider the following 88-residue polypeptide: uncharacterized protein (88 aa).

This is an uncharacterized protein from Orgyia pseudotsugata (Douglas-fir tussock moth).